Consider the following 59-residue polypeptide: Large ribosomal subunit protein uL30 (59 aa).

Belongs to the universal ribosomal protein uL30 family. Part of the 50S ribosomal subunit.

This chain is Large ribosomal subunit protein uL30, found in Rhodococcus erythropolis (strain PR4 / NBRC 100887).